We begin with the raw amino-acid sequence, 181 residues long: Probable chemoreceptor glutamine deamidase CheD (181 aa).

Belongs to the CheD family.

The catalysed reaction is L-glutaminyl-[protein] + H2O = L-glutamyl-[protein] + NH4(+). Probably deamidates glutamine residues to glutamate on methyl-accepting chemotaxis receptors (MCPs), playing an important role in chemotaxis. This is Probable chemoreceptor glutamine deamidase CheD from Agrobacterium fabrum (strain C58 / ATCC 33970) (Agrobacterium tumefaciens (strain C58)).